We begin with the raw amino-acid sequence, 255 residues long: UPF0246 protein BVU_0413 (255 aa).

It belongs to the UPF0246 family.

This chain is UPF0246 protein BVU_0413, found in Phocaeicola vulgatus (strain ATCC 8482 / DSM 1447 / JCM 5826 / CCUG 4940 / NBRC 14291 / NCTC 11154) (Bacteroides vulgatus).